A 442-amino-acid chain; its full sequence is Matrix remodeling-associated protein 8 (442 aa).

An N-terminal signal peptide occupies residues 1 to 19; the sequence is MELLSRVLLWKLLLLQSSA. The Extracellular portion of the chain corresponds to 20 to 340; that stretch reads VLSSGPSGTA…PEDHTHFFQQ (321 aa). 2 consecutive Ig-like V-type domains span residues 25-156 and 159-291; these read PSGT…LEVT and PLLS…LQVT. 2 cysteine pairs are disulfide-bonded: cysteine 53-cysteine 136 and cysteine 185-cysteine 271. A glycan (N-linked (GlcNAc...) asparagine) is linked at asparagine 118. The RGD 1 motif lies at 128-130; sequence RGD. Residue serine 227 is modified to Phosphoserine. Positions 251-253 match the RGD 2 motif; sequence RGD. Residues 296-319 are disordered; sequence EPPARASPGNGSGHSSAPSPDPTL. N-linked (GlcNAc...) asparagine glycosylation is present at asparagine 305. The helical transmembrane segment at 341-361 threads the bilayer; sequence LGYVLATLLLFILLLITVVLA. Topologically, residues 362 to 442 are cytoplasmic; that stretch reads TRYRHSGGCK…DKEFRKEYCK (81 aa).

As to quaternary structure, homodimer in cis. Does not appear to form trans-homodimers. Interacts with ITGB3; the interaction inhibits ITGAV:ITGB3 heterodimer formation. In terms of tissue distribution, widely expressed (at protein level). Highly expressed in brain where it localizes to the glia limitans, which is formed by the endfeet of astrocytes surrounding capillaries, and beneath the pia mater (at protein level). In lung, detected in epithelial cells of the bronchus (at protein level). Expressed in intercalated disks in the heart (at protein level). Detected in pancreatic alpha-cells in the islet of Langerhans (at protein level). In kidney, found in the brush border of the proximal convoluted tubule (at protein level). Expressed in the epithelium of the small intestine (at protein level). Weakly expressed in liver (at protein level). Detected in myeloid cells.

Its subcellular location is the cell membrane. It localises to the cell junction. It is found in the tight junction. The protein resides in the cytoplasm. The protein localises to the cell projection. Its subcellular location is the cilium membrane. It localises to the nucleus. Its function is as follows. Transmembrane protein which can modulate activity of various signaling pathways, probably via binding to integrin ITGAV:ITGB3. Mediates heterophilic cell-cell interactions in vitro. Inhibits osteoclastogenesis downstream of TNFSF11/RANKL and CSF1, where it may function by attenuating signaling via integrin ITGB3 and MAP kinase p38. Plays a role in cartilage formation where it promotes proliferation and maturation of growth plate chondrocytes. Stimulates formation of primary cilia in chondrocytes. Enhances expression of genes involved in the hedgehog signaling pathway in chondrocytes, including the hedgehog signaling molecule IHH; may also promote signaling via the PTHLH/PTHrP pathway. Plays a role in angiogenesis where it suppresses migration of endothelial cells and also promotes their apoptosis. Inhibits VEGF-induced activation of AKT and p38 MAP kinase in endothelial cells. Also inhibits VTN (vitronectin)-mediated integrin ITGAV:ITGB3 signaling and activation of PTK2/FAK. May play a role in the maturation and maintenance of the blood-brain barrier. The polypeptide is Matrix remodeling-associated protein 8 (Mus musculus (Mouse)).